Reading from the N-terminus, the 158-residue chain is Low molecular weight phosphotyrosine protein phosphatase (158 aa).

Alanine 2 carries the N-acetylalanine modification. Cysteine 13 (nucleophile) is an active-site residue. Arginine 19 is an active-site residue. The active-site Proton donor is the aspartate 130. Residues tyrosine 132 and tyrosine 133 each carry the phosphotyrosine modification.

It belongs to the low molecular weight phosphotyrosine protein phosphatase family. In terms of assembly, interacts with EPHA2; dephosphorylates EPHA2. Interacts with EPHB1. Interacts with the SH3 domain of SPTAN1. Phosphorylated by LCK. Phosphorylation at Tyr-132 increases its phosphatase activity.

It localises to the cytoplasm. The catalysed reaction is O-phospho-L-tyrosyl-[protein] + H2O = L-tyrosyl-[protein] + phosphate. It catalyses the reaction a phosphate monoester + H2O = an alcohol + phosphate. Its activity is regulated as follows. Inhibited by sulfhydryl reagents. Its function is as follows. Acts on tyrosine phosphorylated proteins, low-MW aryl phosphates and natural and synthetic acyl phosphates with differences in substrate specificity between isoform 1 and isoform 2. This is Low molecular weight phosphotyrosine protein phosphatase (ACP1) from Sus scrofa (Pig).